A 441-amino-acid chain; its full sequence is ATP-dependent RNA helicase SUB2-1 (441 aa).

Positions Met1 to Ile19 are enriched in acidic residues. A disordered region spans residues Met1 to Glu46. The short motif at Thr57–Gln85 is the Q motif element. One can recognise a Helicase ATP-binding domain in the interval Ile88–Ile263. An ATP-binding site is contributed by Ala101 to Thr108. The DECD box motif lies at Asp210–Asp213. In terms of domain architecture, Helicase C-terminal spans Lys291–Ser436.

The protein belongs to the DEAD box helicase family. DECD subfamily.

It is found in the nucleus. The enzyme catalyses ATP + H2O = ADP + phosphate + H(+). Functionally, ATP-binding RNA helicase involved in transcription elongation and required for the export of mRNA out of the nucleus. SUB2 also plays a role in pre-mRNA splicing and spliceosome assembly. May be involved in rDNA and telomeric silencing, and maintenance of genome integrity. The polypeptide is ATP-dependent RNA helicase SUB2-1 (SUB2-1) (Vanderwaltozyma polyspora (strain ATCC 22028 / DSM 70294 / BCRC 21397 / CBS 2163 / NBRC 10782 / NRRL Y-8283 / UCD 57-17) (Kluyveromyces polysporus)).